The following is a 58-amino-acid chain: DNA-directed RNA polymerases I, II, and III subunit RPABC4 (58 aa).

Residues Cys-19, Cys-22, Cys-36, and Cys-39 each coordinate Zn(2+). The C4-type zinc-finger motif lies at Cys-19–Cys-39.

The protein belongs to the archaeal Rpo12/eukaryotic RPC10 RNA polymerase subunit family. As to quaternary structure, component of the RNA polymerase I (Pol I), RNA polymerase II (Pol II) and RNA polymerase III (Pol III) complexes consisting of at least 13, 12 and 17 subunits, respectively. Pol I complex consists of a ten-subunit catalytic core composed of POLR1A/RPA1, POLR1B/RPA2, POLR1C/RPAC1, POLR1D/RPAC2, POLR1H/RPA12, POLR2E/RPABC1, POLR2F/RPABC2, POLR2H/RPABC3, POLR2K/RPABC4 and POLR2L/RPABC5; a mobile stalk subunit POLR1F/RPA43 protruding from the core and additional subunits homologous to general transcription factors POLR1E/RPA49 and POLR1G/RPA34. Part of Pol I pre-initiation complex (PIC), in which Pol I core assembles with RRN3 and promoter-bound UTBF and SL1/TIF-IB complex. Pol II complex contains a ten-subunit catalytic core composed of POLR2A/RPB1, POLR2B/RPB2, POLR2C/RPB3, POLR2I/RPB9, POLR2J/RPB11, POLR2E/RPABC1, POLR2F/RPABC2, POLR2H/RPABC3, POLR2K/RPABC4 and POLR2L/RPABC5 and a mobile stalk composed of two subunits POLR2D/RPB4 and POLR2G/RPB7. Part of Pol II(G) complex, in which Pol II core associates with an additional subunit POLR2M; unlike conventional Pol II, Pol II(G) functions as a transcriptional repressor. Part of TBP-based Pol II pre-initiation complex (PIC), in which Pol II core assembles with general transcription factors and other specific initiation factors including GTF2E1, GTF2E2, GTF2F1, GTF2F2, TCEA1, ERCC2, ERCC3, GTF2H2, GTF2H3, GTF2H4, GTF2H5, GTF2A1, GTF2A2, GTF2B and TBP; this large multi-subunit PIC complex mediates DNA unwinding and targets Pol II core to the transcription start site where the first phosphodiester bond forms. Pol III complex consists of a ten-subunit catalytic core composed of POLR3A/RPC1, POLR3B/RPC2, POLR1C/RPAC1, POLR1D/RPAC2, POLR3K/RPC10, POLR2E/RPABC1, POLR2F/RPABC2, POLR2H/RPABC3, POLR2K/RPABC4 and POLR2L/RPABC5; a mobile stalk composed of two subunits POLR3H/RPC8 and CRCP/RPC9, protruding from the core and functioning primarily in transcription initiation; and additional subunits homologous to general transcription factors of the RNA polymerase II machinery, POLR3C/RPC3-POLR3F/RPC6-POLR3G/RPC7 heterotrimer required for transcription initiation and POLR3D/RPC4-POLR3E/RPC5 heterodimer involved in both transcription initiation and termination.

It is found in the nucleus. Its subcellular location is the nucleolus. DNA-dependent RNA polymerase catalyzes the transcription of DNA into RNA using the four ribonucleoside triphosphates as substrates. Common component of RNA polymerases I, II and III which synthesize ribosomal RNA precursors, mRNA precursors and many functional non-coding RNAs, and a small RNAs, such as 5S rRNA and tRNAs, respectively. This chain is DNA-directed RNA polymerases I, II, and III subunit RPABC4 (Polr2k), found in Mus musculus (Mouse).